Consider the following 150-residue polypeptide: MADKFHILLLNGPNINMLGTREPDKYGTLSLAEIVNRLTSEAAALNVSLDHLQSNAEYALIDRIHQAKDNVDYILINPAAFAHTSVAIRDALLAVNIPFIEIHLSNVHAREPFRQHSYLSDVAAGVICGLGADGYSYALQTAVKRLSQSH.

Tyr-26 serves as the catalytic Proton acceptor. Substrate contacts are provided by Asn-77, His-83, and Asp-90. His-103 serves as the catalytic Proton donor. Residues 104 to 105 and Arg-114 each bind substrate; that span reads LS.

It belongs to the type-II 3-dehydroquinase family. Homododecamer.

The catalysed reaction is 3-dehydroquinate = 3-dehydroshikimate + H2O. It participates in metabolic intermediate biosynthesis; chorismate biosynthesis; chorismate from D-erythrose 4-phosphate and phosphoenolpyruvate: step 3/7. Functionally, catalyzes a trans-dehydration via an enolate intermediate. In Klebsiella pneumoniae (strain 342), this protein is 3-dehydroquinate dehydratase.